The following is a 139-amino-acid chain: Large ribosomal subunit protein uL16 (139 aa).

This sequence belongs to the universal ribosomal protein uL16 family. Part of the 50S ribosomal subunit.

In terms of biological role, binds 23S rRNA and is also seen to make contacts with the A and possibly P site tRNAs. The polypeptide is Large ribosomal subunit protein uL16 (Chlorobium phaeobacteroides (strain BS1)).